The sequence spans 468 residues: ATP synthase subunit beta (468 aa).

Residue 155 to 162 (GGAGVGKT) coordinates ATP.

This sequence belongs to the ATPase alpha/beta chains family. F-type ATPases have 2 components, CF(1) - the catalytic core - and CF(0) - the membrane proton channel. CF(1) has five subunits: alpha(3), beta(3), gamma(1), delta(1), epsilon(1). CF(0) has three main subunits: a(1), b(2) and c(9-12). The alpha and beta chains form an alternating ring which encloses part of the gamma chain. CF(1) is attached to CF(0) by a central stalk formed by the gamma and epsilon chains, while a peripheral stalk is formed by the delta and b chains.

The protein localises to the cell membrane. It carries out the reaction ATP + H2O + 4 H(+)(in) = ADP + phosphate + 5 H(+)(out). In terms of biological role, produces ATP from ADP in the presence of a proton gradient across the membrane. The catalytic sites are hosted primarily by the beta subunits. The protein is ATP synthase subunit beta of Streptococcus uberis (strain ATCC BAA-854 / 0140J).